We begin with the raw amino-acid sequence, 297 residues long: Phosphatidylserine decarboxylase proenzyme (297 aa).

Catalysis depends on charge relay system; for autoendoproteolytic cleavage activity residues aspartate 100, histidine 157, and serine 263. The Schiff-base intermediate with substrate; via pyruvic acid; for decarboxylase activity role is filled by serine 263. Serine 263 bears the Pyruvic acid (Ser); by autocatalysis mark.

It belongs to the phosphatidylserine decarboxylase family. PSD-B subfamily. Prokaryotic type I sub-subfamily. Heterodimer of a large membrane-associated beta subunit and a small pyruvoyl-containing alpha subunit. It depends on pyruvate as a cofactor. Is synthesized initially as an inactive proenzyme. Formation of the active enzyme involves a self-maturation process in which the active site pyruvoyl group is generated from an internal serine residue via an autocatalytic post-translational modification. Two non-identical subunits are generated from the proenzyme in this reaction, and the pyruvate is formed at the N-terminus of the alpha chain, which is derived from the carboxyl end of the proenzyme. The autoendoproteolytic cleavage occurs by a canonical serine protease mechanism, in which the side chain hydroxyl group of the serine supplies its oxygen atom to form the C-terminus of the beta chain, while the remainder of the serine residue undergoes an oxidative deamination to produce ammonia and the pyruvoyl prosthetic group on the alpha chain. During this reaction, the Ser that is part of the protease active site of the proenzyme becomes the pyruvoyl prosthetic group, which constitutes an essential element of the active site of the mature decarboxylase.

Its subcellular location is the cell membrane. It catalyses the reaction a 1,2-diacyl-sn-glycero-3-phospho-L-serine + H(+) = a 1,2-diacyl-sn-glycero-3-phosphoethanolamine + CO2. It participates in phospholipid metabolism; phosphatidylethanolamine biosynthesis; phosphatidylethanolamine from CDP-diacylglycerol: step 2/2. Functionally, catalyzes the formation of phosphatidylethanolamine (PtdEtn) from phosphatidylserine (PtdSer). In Haemophilus ducreyi (strain 35000HP / ATCC 700724), this protein is Phosphatidylserine decarboxylase proenzyme.